Consider the following 95-residue polypeptide: Co-chaperonin GroES (95 aa).

This sequence belongs to the GroES chaperonin family. In terms of assembly, heptamer of 7 subunits arranged in a ring. Interacts with the chaperonin GroEL.

It is found in the cytoplasm. Functionally, together with the chaperonin GroEL, plays an essential role in assisting protein folding. The GroEL-GroES system forms a nano-cage that allows encapsulation of the non-native substrate proteins and provides a physical environment optimized to promote and accelerate protein folding. GroES binds to the apical surface of the GroEL ring, thereby capping the opening of the GroEL channel. The sequence is that of Co-chaperonin GroES from Bordetella petrii (strain ATCC BAA-461 / DSM 12804 / CCUG 43448).